The following is a 150-amino-acid chain: Large ribosomal subunit protein bL9 (150 aa).

Belongs to the bacterial ribosomal protein bL9 family.

Its function is as follows. Binds to the 23S rRNA. The protein is Large ribosomal subunit protein bL9 of Streptococcus pyogenes serotype M18 (strain MGAS8232).